A 283-amino-acid polypeptide reads, in one-letter code: Phospholipid phosphatase 1 (283 aa).

Topologically, residues 1 to 6 (MFDKTR) are cytoplasmic. The PDZ-binding; involved in localization to the apical cell membrane signature appears at 5-7 (TRL). A helical transmembrane segment spans residues 7 to 27 (LPYVALDVICVLLAGLPFAIL). Topologically, residues 28–53 (TSRHTPFQRGIFCNDDSIKYPYKEDT) are extracellular. The chain crosses the membrane as a helical span at residues 54 to 74 (IPYALLGGIVIPFCIIVMSIG). Topologically, residues 75–88 (ESLSVYFNVLHSNS) are cytoplasmic. A helical membrane pass occupies residues 89-109 (FVGNPYIATIYKAVGAFLFGV). The Extracellular segment spans residues 110-164 (SASQSLTDIAKYTIGSLRPHFLAICNPDWSKINCSDGYIEDYICQGNEEKVKEGR). Residues 120-128 (KYTIGSLRP) form a phosphatase sequence motif I region. Residue Asn-142 is glycosylated (N-linked (GlcNAc...) asparagine). Residues 165-185 (LSFYSGHSSFSMYCMLFVALY) traverse the membrane as a helical segment. The interval 168 to 171 (YSGH) is phosphatase sequence motif II. Residue His-171 is the Proton donors of the active site. Over 186–199 (LQARMKGDWARLLR) the chain is Cytoplasmic. Residues 200-220 (PMLQFGLIAFSIYVGLSRVSD) form a helical membrane-spanning segment. Residues 216–227 (SRVSDYKHHWSD) are phosphatase sequence motif III. At 221 to 229 (YKHHWSDVT) the chain is on the extracellular side. His-223 acts as the Nucleophile in catalysis. The helical transmembrane segment at 230 to 250 (VGLIQGAAMAILVALYVSDFF) threads the bilayer. The Cytoplasmic segment spans residues 251-283 (KDTHSYKERKEEDPHTTLHETASSRNYSTNHEP). A disordered region spans residues 260–283 (KEEDPHTTLHETASSRNYSTNHEP). Polar residues predominate over residues 269–283 (HETASSRNYSTNHEP).

It belongs to the PA-phosphatase related phosphoesterase family. As to quaternary structure, forms functional homodimers and homooligomers that are not required for substrate recognition and catalytic activity. Can also form heterooligomers with PLPP2 and PLPP3. N-glycosylated. N-linked sugars are of the complex type. N-glycosylation is not required for the phosphatase activity. Widely expressed. Highly expressed in kidney and lung. Almost undetectable in brain, heart, bone, muscle or spleen.

The protein resides in the cell membrane. Its subcellular location is the apical cell membrane. It is found in the membrane raft. The protein localises to the membrane. It localises to the caveola. The enzyme catalyses a 1,2-diacyl-sn-glycero-3-phosphate + H2O = a 1,2-diacyl-sn-glycerol + phosphate. The catalysed reaction is 1,2-dihexadecanoyl-sn-glycero-3-phosphate + H2O = 1,2-dihexadecanoyl-sn-glycerol + phosphate. It catalyses the reaction 1,2-di-(9Z-octadecenoyl)-sn-glycero-3-phosphate + H2O = 1,2-di-(9Z-octadecenoyl)-sn-glycerol + phosphate. It carries out the reaction a monoacyl-sn-glycero-3-phosphate + H2O = a monoacylglycerol + phosphate. The enzyme catalyses (9Z)-octadecenoyl-sn-glycero-3-phosphate + H2O = (9Z-octadecenoyl)-glycerol + phosphate. The catalysed reaction is a 1-acyl-sn-glycero-3-phosphate + H2O = a 1-acyl-sn-glycerol + phosphate. It catalyses the reaction 1-(9Z-octadecenoyl)-sn-glycero-3-phosphate + H2O = 1-(9Z-octadecenoyl)-sn-glycerol + phosphate. It carries out the reaction a 1,2-diacyl-sn-glycerol 3-diphosphate + H2O = a 1,2-diacyl-sn-glycero-3-phosphate + phosphate + H(+). The enzyme catalyses sphing-4-enine 1-phosphate + H2O = sphing-4-enine + phosphate. The catalysed reaction is an N-acylsphing-4-enine 1-phosphate + H2O = an N-acylsphing-4-enine + phosphate. It catalyses the reaction N-(octanoyl)-sphing-4-enine-1-phosphate + H2O = N-octanoylsphing-4-enine + phosphate. It carries out the reaction N-(9Z-octadecenoyl)-ethanolamine phosphate + H2O = N-(9Z-octadecenoyl) ethanolamine + phosphate. The enzyme catalyses 1-hexadecanoyl-2-(9Z-octadecenoyl)-sn-glycero-3-phosphate + H2O = 1-hexadecanoyl-2-(9Z-octadecenoyl)-sn-glycerol + phosphate. Its pathway is lipid metabolism; phospholipid metabolism. Magnesium-independent phospholipid phosphatase. Insensitive to N-ethylmaleimide. In terms of biological role, magnesium-independent phospholipid phosphatase of the plasma membrane that catalyzes the dephosphorylation of a variety of glycerolipid and sphingolipid phosphate esters including phosphatidate/PA, lysophosphatidate/LPA, diacylglycerol pyrophosphate/DGPP, sphingosine 1-phosphate/S1P and ceramide 1-phosphate/C1P. Also acts on N-oleoyl ethanolamine phosphate/N-(9Z-octadecenoyl)-ethanolamine phosphate, a potential physiological compound. Through its extracellular phosphatase activity allows both the hydrolysis and the cellular uptake of these bioactive lipid mediators from the milieu, regulating signal transduction in different cellular processes. It is for instance essential for the extracellular hydrolysis of S1P and subsequent conversion into intracellular S1P. Involved in the regulation of inflammation, platelets activation, cell proliferation and migration among other processes. May also have an intracellular activity to regulate phospholipid-mediated signaling pathways. The protein is Phospholipid phosphatase 1 of Mus musculus (Mouse).